A 542-amino-acid chain; its full sequence is Cytochrome P450 734A6 (542 aa).

Residues 2-22 (GWWGWAAAAAAAAAWVAVKVL) form a helical membrane-spanning segment. Residue cysteine 474 coordinates heme.

This sequence belongs to the cytochrome P450 family. It depends on heme as a cofactor. In terms of tissue distribution, highly expressed in leaf sheaths. Expressed in roots, shoot apex, leaf blades, internodes and panicles.

The protein resides in the membrane. In terms of biological role, cytochrome P450 involved in brassinosteroids (BRs) inactivation and regulation of BRs homeostasis. Is a multifunctional and multisubstrate enzyme that controls the endogenous bioactive BR content both by direct inactivation of castasterone (CS) and by decreasing the levels of BR precursors. Catalyzes the oxidation of carbon 22 hydroxylated BR intermediates to produce C26 oxidized metabolites. This Oryza sativa subsp. japonica (Rice) protein is Cytochrome P450 734A6 (CYP734A6).